A 295-amino-acid polypeptide reads, in one-letter code: 2-dehydropantoate 2-reductase (295 aa).

NADP(+) is bound by residues 9–14, N100, and A126; that span reads GPGAVG. N100 is a substrate binding site. The active-site Proton donor is the K177. Substrate-binding residues include N181 and S246. NADP(+) is bound at residue E258.

Belongs to the ketopantoate reductase family.

It localises to the cytoplasm. The enzyme catalyses (R)-pantoate + NADP(+) = 2-dehydropantoate + NADPH + H(+). It participates in cofactor biosynthesis; (R)-pantothenate biosynthesis; (R)-pantoate from 3-methyl-2-oxobutanoate: step 2/2. Functionally, catalyzes the NADPH-dependent reduction of ketopantoate into pantoic acid. The sequence is that of 2-dehydropantoate 2-reductase from Mycobacterium tuberculosis (strain CDC 1551 / Oshkosh).